A 226-amino-acid polypeptide reads, in one-letter code: Large ribosomal subunit protein mL67 (226 aa).

It belongs to the mitochondrion-specific ribosomal protein mL67 family. In terms of assembly, component of the mitochondrial large ribosomal subunit (mt-LSU). Mature yeast 74S mitochondrial ribosomes consist of a small (37S) and a large (54S) subunit. The 37S small subunit contains a 15S ribosomal RNA (15S mt-rRNA) and 34 different proteins. The 54S large subunit contains a 21S rRNA (21S mt-rRNA) and 46 different proteins.

Its subcellular location is the nucleus. It localises to the mitochondrion. Functionally, component of the mitochondrial ribosome (mitoribosome), a dedicated translation machinery responsible for the synthesis of mitochondrial genome-encoded proteins, including at least some of the essential transmembrane subunits of the mitochondrial respiratory chain. The mitoribosomes are attached to the mitochondrial inner membrane and translation products are cotranslationally integrated into the membrane. mL67/MHR1 also has extraribosomal functions, being involved in regulation of mitochondrial DNA recombination, maintenance and repair, and generation of homoplasmic cells. mL67/MHR1 also acts as transcription factor involved in regulation of RNA polymerase II-dependent transcription. In Saccharomyces cerevisiae (strain ATCC 204508 / S288c) (Baker's yeast), this protein is Large ribosomal subunit protein mL67 (MHR1).